Here is a 223-residue protein sequence, read N- to C-terminus: UPF0441 protein YgiB (223 aa).

The segment at 201–223 (ESVAKQSAMQRSAAGTSTRSMGG) is disordered. Residues 204 to 223 (AKQSAMQRSAAGTSTRSMGG) show a composition bias toward polar residues.

This sequence belongs to the UPF0441 family.

In Salmonella arizonae (strain ATCC BAA-731 / CDC346-86 / RSK2980), this protein is UPF0441 protein YgiB.